A 343-amino-acid polypeptide reads, in one-letter code: MIEFLQHKEATIAREILAVQIPAYIKETEIIGFDGIPALQEKVKDIQASHERFAGYRKNGKLIGVISYEKNMHYLTICRLVVHPDGFRKGIGRALLQFVIDHNEDAEKIEVVTAENNTPAVSLYTQAGFQKAETVKAAQGLLLSVFHLYPKRKVEIILYNEKWAECFDEEKERLKLVFGPEIIAIHHIGSTSIPNMAAKPIIDMLIEVRSIEAVSQFDEQMKANGYTPKGENGIAGRRYFQKGGNKRTHHVHMYEQGNPAIERHLLFRDYLRAHPNIAKEYAVLKKQLAAQHPDSINQYIQGKDEWIKTAEENAKRWKKGRNNANGSIVCYNSENDENGGFTL.

Residues 8 to 144 (KEATIAREIL…VKAAQGLLLS (137 aa)) form the N-acetyltransferase domain. Residues 135-343 (VKAAQGLLLS…ENDENGGFTL (209 aa)) are UPF0157.

This sequence in the C-terminal section; belongs to the UPF0157 (GrpB) family.

The polypeptide is UPF0157 protein YqkA (yqkA) (Bacillus subtilis (strain 168)).